Here is a 37-residue protein sequence, read N- to C-terminus: Potassium channel toxin alpha-KTx 11.2 (37 aa).

Intrachain disulfides connect Cys8-Cys27, Cys13-Cys33, and Cys17-Cys35.

The protein belongs to the short scorpion toxin superfamily. Potassium channel inhibitor family. Alpha-KTx 11 subfamily. As to expression, expressed by the venom gland.

The protein resides in the secreted. Its function is as follows. Binds and inhibits voltage-sensitive potassium channels. Inhibits the vertebrate potassium channel Kv1.1/KCNA1 with low affinity. This Parabuthus villosus (Black hairy thick-tailed scorpion) protein is Potassium channel toxin alpha-KTx 11.2.